A 156-amino-acid chain; its full sequence is Small ribosomal subunit protein uS7 (156 aa).

The protein belongs to the universal ribosomal protein uS7 family. As to quaternary structure, part of the 30S ribosomal subunit. Contacts proteins S9 and S11.

In terms of biological role, one of the primary rRNA binding proteins, it binds directly to 16S rRNA where it nucleates assembly of the head domain of the 30S subunit. Is located at the subunit interface close to the decoding center, probably blocks exit of the E-site tRNA. The polypeptide is Small ribosomal subunit protein uS7 (Streptomyces griseus subsp. griseus (strain JCM 4626 / CBS 651.72 / NBRC 13350 / KCC S-0626 / ISP 5235)).